Here is a 291-residue protein sequence, read N- to C-terminus: Undecaprenyl-diphosphatase (291 aa).

8 helical membrane-spanning segments follow: residues 1–21 (MFII…LTEF), 48–68 (SAFT…AWVF), 102–122 (LHVL…DDFI), 126–146 (LFSV…MIIA), 162–182 (ISYF…WPGF), 203–223 (SDFT…LSLL), 231–251 (IADI…GLIA), and 267–287 (FAIY…GFGI).

This sequence belongs to the UppP family.

Its subcellular location is the cell membrane. It catalyses the reaction di-trans,octa-cis-undecaprenyl diphosphate + H2O = di-trans,octa-cis-undecaprenyl phosphate + phosphate + H(+). Catalyzes the dephosphorylation of undecaprenyl diphosphate (UPP). Confers resistance to bacitracin. In Staphylococcus aureus (strain COL), this protein is Undecaprenyl-diphosphatase.